A 283-amino-acid chain; its full sequence is NFU1 iron-sulfur cluster scaffold homolog, mitochondrial (283 aa).

The N-terminal 65 residues, 1–65, are a transit peptide targeting the mitochondrion; that stretch reads MSKFLSQAAI…ELRMPVACRR (65 aa). The nifU stretch occupies residues 182–250; sequence IKELLDTRIR…IPEVESVEQV (69 aa). [4Fe-4S] cluster-binding residues include Cys219 and Cys222.

Belongs to the NifU family.

The protein localises to the mitochondrion. Molecular scaffold for [Fe-S] cluster assembly of mitochondrial iron-sulfur proteins. This chain is NFU1 iron-sulfur cluster scaffold homolog, mitochondrial, found in Drosophila sechellia (Fruit fly).